Consider the following 643-residue polypeptide: Hepatoma-derived growth factor-related protein 2 (643 aa).

The region spanning 7-64 (PGDLVFAKMKGYPHWPARIDDVKDGAVKPPPNKYPIFFYGTHETAFLAPKDLFPYEKC) is the PWWP domain. Disordered regions lie at residues 88–450 (PQAS…KKPE) and 548–643 (LESQ…NQTS). Low complexity predominate over residues 90–104 (ASYSLPPASVSSSDS). Residues 107–116 (PEEKSTARSD) show a composition bias toward basic and acidic residues. The segment covering 176-187 (SEEENSDSDQDF) has biased composition (acidic residues). The span at 194–204 (PRIQRRTTNLG) shows a compositional bias: polar residues. Residues 209 to 231 (IFAESDSKSDESEDEKKEEEQKK) are compositionally biased toward basic and acidic residues. Positions 232 to 249 (SPSSSSASSPSLSSSDSE) are enriched in low complexity. 3 stretches are compositionally biased toward basic and acidic residues: residues 290–353 (SVDR…DSSK), 373–382 (EDKKPVKEVK), and 417–450 (RPSE…KKPE). Positions 295 to 345 (SEWKKRDEERRRELEERRKKEQEEQLRRLREEEREEEERKKREKAEKGDKS) form a coiled coil. Residues 549-559 (ESQQKTVQKVN) show a composition bias toward polar residues. 2 stretches are compositionally biased toward basic and acidic residues: residues 560–575 (TAEK…GKVE) and 608–622 (NKTE…HAEH).

The protein belongs to the HDGF family.

It is found in the nucleus. The protein resides in the cytoplasm. Its function is as follows. May act as a regulator of myogenesis. Promotes the repair of DNA double-strand breaks (DSBs) through the homologous recombination pathway by facilitating the recruitment of the DNA endonuclease RBBP8 to the DSBs. The sequence is that of Hepatoma-derived growth factor-related protein 2 (hdgfl2) from Xenopus tropicalis (Western clawed frog).